The chain runs to 205 residues: GTP cyclohydrolase-2 (205 aa).

49 to 53 serves as a coordination point for GTP; it reads RIHSE. Positions 54, 65, and 67 each coordinate Zn(2+). GTP is bound by residues Gln70, 92-94, and Thr114; that span reads EGR. The active-site Proton acceptor is Asp126. Residue Arg128 is the Nucleophile of the active site. Positions 149 and 154 each coordinate GTP.

It belongs to the GTP cyclohydrolase II family. Zn(2+) serves as cofactor.

It catalyses the reaction GTP + 4 H2O = 2,5-diamino-6-hydroxy-4-(5-phosphoribosylamino)-pyrimidine + formate + 2 phosphate + 3 H(+). Its pathway is cofactor biosynthesis; riboflavin biosynthesis; 5-amino-6-(D-ribitylamino)uracil from GTP: step 1/4. In terms of biological role, catalyzes the conversion of GTP to 2,5-diamino-6-ribosylamino-4(3H)-pyrimidinone 5'-phosphate (DARP), formate and pyrophosphate. This chain is GTP cyclohydrolase-2, found in Shewanella woodyi (strain ATCC 51908 / MS32).